Consider the following 592-residue polypeptide: Probable oxidoreductase EphD (592 aa).

The AB hydrolase-1 domain maps to 30–286 (PTVVLVHGFP…KAGHFSPMSH (257 aa)). Ser461 contacts substrate. Tyr474 (proton acceptor) is an active-site residue.

It belongs to the short-chain dehydrogenases/reductases (SDR) family.

This Mycobacterium bovis (strain ATCC BAA-935 / AF2122/97) protein is Probable oxidoreductase EphD (ephD).